The following is a 317-amino-acid chain: DNA-directed RNA polymerase subunit alpha (317 aa).

Positions 1–234 are alpha N-terminal domain (alpha-NTD); it reads MKQFVRPEFI…AHLEFFIDLN (234 aa). The alpha C-terminal domain (alpha-CTD) stretch occupies residues 249–317; sequence DDKELDRTVE…ASLGLAFRQS (69 aa).

The protein belongs to the RNA polymerase alpha chain family. Homodimer. The RNAP catalytic core consists of 2 alpha, 1 beta, 1 beta' and 1 omega subunit. When a sigma factor is associated with the core the holoenzyme is formed, which can initiate transcription.

The catalysed reaction is RNA(n) + a ribonucleoside 5'-triphosphate = RNA(n+1) + diphosphate. Its function is as follows. DNA-dependent RNA polymerase catalyzes the transcription of DNA into RNA using the four ribonucleoside triphosphates as substrates. This chain is DNA-directed RNA polymerase subunit alpha, found in Mycoplasma capricolum subsp. capricolum (strain California kid / ATCC 27343 / NCTC 10154).